The sequence spans 4690 residues: Nonribosomal peptide synthetase sidN (4690 aa).

Residues 238–656 are adenylation 1; that stretch reads ARVRENPGRI…LGRLSSDQIK (419 aa). Positions 779–856 constitute a Carrier 1 domain; that stretch reads SSSIPMLQSV…DLDTKAQQAL (78 aa). An O-(pantetheine 4'-phosphoryl)serine modification is found at S816. The interval 924–1175 is condensation 1; sequence APGGKAFIQH…AFGNTMSDRF (252 aa). The adenylation 2 stretch occupies residues 1349-1760; that stretch reads EFAQKSPNAI…GRKDDLVKIR (412 aa). A Carrier 2 domain is found at 1889–1965; it reads PAWCIKHRPL…DLINHLSVKR (77 aa). S1926 carries the O-(pantetheine 4'-phosphoryl)serine modification. The interval 2001–2285 is condensation 2; that stretch reads PTTVFQDGML…SERLLESQLV (285 aa). An adenylation 3 region spans residues 2464–2869; the sequence is TWAKTHPEWK…GRKDEQVKVR (406 aa). A Carrier 3 domain is found at 3002-3079; sequence RDLTSIEKQI…ELGRMKNALK (78 aa). S3040 is subject to O-(pantetheine 4'-phosphoryl)serine. The interval 3121–3530 is condensation 3; the sequence is CMPLQEVLVA…QMESLVTSFT (410 aa). One can recognise a Carrier 4 domain in the interval 3564-3637; that stretch reads SVLEQQIRDV…KLATHIQTTS (74 aa). S3598 bears the O-(pantetheine 4'-phosphoryl)serine mark. The segment at 3679–4087 is condensation 4; it reads VYPLTPLQAG…FESIRKHPDE (409 aa). Residues 4119-4195 enclose the Carrier 5 domain; that stretch reads SAIDQFLDPL…KLCEVAFAKS (77 aa). Position 4156 is an O-(pantetheine 4'-phosphoryl)serine (S4156). Residues 4262–4589 are condensation 5; that stretch reads WVFKAENGLD…FNAHLNILWN (328 aa).

Belongs to the NRP synthetase family.

The protein operates within siderophore biosynthesis. Nonribosomal peptide synthetase required for the biosynthetis of epichloenin A, an extracellular siderophore that plays a crucial role in endophyte-grass symbioses. SidN assembles epichloenin A by activating and incorporating three trans-anhydromevalonylhydroxyornithine (trans-AMHO), 1 glutamine and 4 glycine moieties. Trans-AMHO is produced from L-ornithine via 2 steps involving a L-ornithine N(5)-monooxygenase and an AHMO-N(5)-transacylase that have still to be identified. The third adenylation domain (A3) of sidN incorporates the hydroxamate groups of the siderophore which forms an octahedral iron complex. The other component amino acids are assembled by sidN adenylation domains A1 and A2. This chain is Nonribosomal peptide synthetase sidN, found in Epichloe festucae (strain Fl1).